The primary structure comprises 174 residues: Adenylate kinase (174 aa).

The NMP stretch occupies residues 12–41; it reads STGDMLRAAIKAGTPLGLEAKKIIDEGGLV. AMP contacts are provided by residues threonine 13, arginine 18, 39 to 41, 67 to 70, and glutamine 74; these read GLV and GFPR. The LID stretch occupies residues 104-141; it reads GRRVHLASGRTYHVTYNPPKVEGKDDVTGEDLIQRDDD. ATP-binding positions include arginine 105 and 114-115; that span reads TY. Residues arginine 138 and arginine 149 each contribute to the AMP site.

It belongs to the adenylate kinase family. Monomer.

It localises to the cytoplasm. The catalysed reaction is AMP + ATP = 2 ADP. It functions in the pathway purine metabolism; AMP biosynthesis via salvage pathway; AMP from ADP: step 1/1. In terms of biological role, catalyzes the reversible transfer of the terminal phosphate group between ATP and AMP. Plays an important role in cellular energy homeostasis and in adenine nucleotide metabolism. The polypeptide is Adenylate kinase (Neisseria lactamica).